The sequence spans 299 residues: Transcription elongation factor A protein 2 (299 aa).

Residues 5 to 82 (EEIARIARRL…KSWKKLLDVS (78 aa)) enclose the TFIIS N-terminal domain. Lys57 participates in a covalent cross-link: Glycyl lysine isopeptide (Lys-Gly) (interchain with G-Cter in ubiquitin). Ser59 and Ser100 each carry phosphoserine. Residues 82–127 (SDGKSRNQGRGTPLPTSSSKDASRTTDLSCKKPDPPRTPSTPRITT) form a disordered region. A compositionally biased stretch (polar residues) spans 87–101 (RNQGRGTPLPTSSSK). Basic and acidic residues predominate over residues 102 to 116 (DASRTTDLSCKKPDP). The region spanning 138-254 (VRNKCREMLT…EHQMARTGGT (117 aa)) is the TFIIS central domain. The TFIIS-type zinc-finger motif lies at 257–297 (DLFTCNKCRKKNCTYTQVQTRSSDEPMTTYVVCNECGNRWK). Zn(2+) is bound by residues Cys261, Cys264, Cys289, and Cys292.

The protein belongs to the TFS-II family. In terms of assembly, interacts with the basal transcription factor GTF2B. Interacts with REXO1. Testis and ovary specific. Specific to testicular germ cells.

It localises to the nucleus. In terms of biological role, necessary for efficient RNA polymerase II transcription elongation past template-encoded arresting sites. The arresting sites in DNA have the property of trapping a certain fraction of elongating RNA polymerases that pass through, resulting in locked ternary complexes. Cleavage of the nascent transcript by S-II allows the resumption of elongation from the new 3'-terminus. The sequence is that of Transcription elongation factor A protein 2 (Tcea2) from Mus musculus (Mouse).